Here is a 344-residue protein sequence, read N- to C-terminus: HTH-type transcriptional regulator MalR (344 aa).

In terms of domain architecture, HTH lacI-type spans 1-54 (MTTRLADIAAQAGVSEATVSRVLNGKPGVAATTRQSVLAALDVLGYERPVRLRQ). The segment at residues 5 to 24 (LADIAAQAGVSEATVSRVLN) is a DNA-binding region (H-T-H motif).

Transcriptional repressor of the maltosaccharide utilization operon malEFG. The sequence is that of HTH-type transcriptional regulator MalR (malR) from Streptomyces coelicolor (strain ATCC BAA-471 / A3(2) / M145).